Reading from the N-terminus, the 709-residue chain is Elongation factor G (709 aa).

In terms of domain architecture, tr-type G spans 8–297 (ANTRNIGIMA…AVIDYLPSPL (290 aa)). GTP-binding positions include 17–24 (AHVDAGKT), 81–85 (DTPGH), and 135–138 (NKMD).

It belongs to the TRAFAC class translation factor GTPase superfamily. Classic translation factor GTPase family. EF-G/EF-2 subfamily.

It is found in the cytoplasm. Functionally, catalyzes the GTP-dependent ribosomal translocation step during translation elongation. During this step, the ribosome changes from the pre-translocational (PRE) to the post-translocational (POST) state as the newly formed A-site-bound peptidyl-tRNA and P-site-bound deacylated tRNA move to the P and E sites, respectively. Catalyzes the coordinated movement of the two tRNA molecules, the mRNA and conformational changes in the ribosome. This is Elongation factor G from Lactococcus lactis subsp. cremoris (strain MG1363).